The following is a 347-amino-acid chain: Farnesyl pyrophosphate synthase ERG20 (347 aa).

The isopentenyl diphosphate site is built by lysine 50, arginine 53, and glutamine 88. Mg(2+) is bound by residues aspartate 95 and aspartate 99. Arginine 104 is a binding site for dimethylallyl diphosphate. Isopentenyl diphosphate is bound at residue arginine 105. Dimethylallyl diphosphate is bound by residues lysine 192, threonine 193, glutamine 232, lysine 249, and lysine 258.

It belongs to the FPP/GGPP synthase family. Mg(2+) is required as a cofactor.

The enzyme catalyses isopentenyl diphosphate + dimethylallyl diphosphate = (2E)-geranyl diphosphate + diphosphate. It carries out the reaction isopentenyl diphosphate + (2E)-geranyl diphosphate = (2E,6E)-farnesyl diphosphate + diphosphate. It functions in the pathway isoprenoid biosynthesis; farnesyl diphosphate biosynthesis; farnesyl diphosphate from geranyl diphosphate and isopentenyl diphosphate: step 1/1. The protein operates within isoprenoid biosynthesis; geranyl diphosphate biosynthesis; geranyl diphosphate from dimethylallyl diphosphate and isopentenyl diphosphate: step 1/1. Functionally, farnesyl pyrophosphate synthase; part of the second module of ergosterol biosynthesis pathway that includes the middle steps of the pathway. ERG20 catalyzes the sequential condensation of isopentenyl pyrophosphate with dimethylallyl pyrophosphate, and then with the resultant geranylpyrophosphate to the ultimate product farnesyl pyrophosphate. The second module is carried out in the vacuole and involves the formation of farnesyl diphosphate, which is also an important intermediate in the biosynthesis of ubiquinone, dolichol, heme and prenylated proteins. Activity by the mevalonate kinase ERG12 (FG05912) first converts mevalonate into 5-phosphomevalonate. 5-phosphomevalonate is then further converted to 5-diphosphomevalonate by the phosphomevalonate kinase ERG8 (FG09764). The diphosphomevalonate decarboxylase ERG19 (FG10424) then produces isopentenyl diphosphate. The isopentenyl-diphosphate delta-isomerase IDI1 (FG09722) then catalyzes the 1,3-allylic rearrangement of the homoallylic substrate isopentenyl (IPP) to its highly electrophilic allylic isomer, dimethylallyl diphosphate (DMAPP). Finally the farnesyl diphosphate synthase ERG20 (FG06784) catalyzes the sequential condensation of isopentenyl pyrophosphate with dimethylallyl pyrophosphate, and then with the resultant geranylpyrophosphate to the ultimate product farnesyl pyrophosphate. In Gibberella zeae (strain ATCC MYA-4620 / CBS 123657 / FGSC 9075 / NRRL 31084 / PH-1) (Wheat head blight fungus), this protein is Farnesyl pyrophosphate synthase ERG20.